The following is a 155-amino-acid chain: Phospholipase A2 A2-actitoxin-Ucs2a (155 aa).

Residues 1–19 form the signal peptide; that stretch reads MKNNIILVILLGISVFVDC. A propeptide spanning residues 20–42 is cleaved from the precursor; that stretch reads LPLNDQEEDKSLNAQESEVSAVQ. Intrachain disulfides connect cysteine 55–cysteine 118, cysteine 71–cysteine 87, cysteine 86–cysteine 143, cysteine 93–cysteine 136, cysteine 100–cysteine 129, and cysteine 122–cysteine 134. Ca(2+)-binding residues include glycine 72 and glycine 74. Residue histidine 90 is part of the active site. Aspartate 91 provides a ligand contact to Ca(2+). Residue aspartate 137 is part of the active site.

This sequence belongs to the phospholipase A2 family. Ca(2+) is required as a cofactor.

It localises to the secreted. The protein localises to the nematocyst. The catalysed reaction is a 1,2-diacyl-sn-glycero-3-phosphocholine + H2O = a 1-acyl-sn-glycero-3-phosphocholine + a fatty acid + H(+). Its function is as follows. PLA2 catalyzes the calcium-dependent hydrolysis of the 2-acyl groups in 3-sn-phosphoglycerides. This chain is Phospholipase A2 A2-actitoxin-Ucs2a, found in Urticina crassicornis (Mottled anemone).